The chain runs to 170 residues: Ribosomal RNA small subunit methyltransferase G (170 aa).

S-adenosyl-L-methionine is bound by residues Gly-70, Leu-75, 120 to 121, and Arg-138; that span reads AE.

It belongs to the methyltransferase superfamily. RNA methyltransferase RsmG family.

It is found in the cytoplasm. In terms of biological role, specifically methylates the N7 position of guanine in position 518 of 16S rRNA. The polypeptide is Ribosomal RNA small subunit methyltransferase G (Mycobacterium ulcerans (strain Agy99)).